The chain runs to 1465 residues: DNA polymerase III PolC-type (1465 aa).

Residues 427-583 (YVVFDVETTG…YDAEATGRLL (157 aa)) form the Exonuclease domain.

The protein belongs to the DNA polymerase type-C family. PolC subfamily.

Its subcellular location is the cytoplasm. It carries out the reaction DNA(n) + a 2'-deoxyribonucleoside 5'-triphosphate = DNA(n+1) + diphosphate. Required for replicative DNA synthesis. This DNA polymerase also exhibits 3' to 5' exonuclease activity. The protein is DNA polymerase III PolC-type of Streptococcus pyogenes serotype M12 (strain MGAS2096).